A 407-amino-acid chain; its full sequence is Argininosuccinate synthase (407 aa).

ATP is bound by residues 13–21 (AYSGGLDTS) and Ala40. Residues Tyr91 and Ser96 each coordinate L-citrulline. Gly121 serves as a coordination point for ATP. L-aspartate-binding residues include Thr123, Asn127, and Asp128. An L-citrulline-binding site is contributed by Asn127. The L-citrulline site is built by Arg131, Ser182, Ser191, Glu267, and Tyr279.

Belongs to the argininosuccinate synthase family. Type 1 subfamily. Homotetramer.

The protein resides in the cytoplasm. The enzyme catalyses L-citrulline + L-aspartate + ATP = 2-(N(omega)-L-arginino)succinate + AMP + diphosphate + H(+). Its pathway is amino-acid biosynthesis; L-arginine biosynthesis; L-arginine from L-ornithine and carbamoyl phosphate: step 2/3. The chain is Argininosuccinate synthase from Agrobacterium fabrum (strain C58 / ATCC 33970) (Agrobacterium tumefaciens (strain C58)).